The sequence spans 200 residues: Recombination protein RecR (200 aa).

The C4-type zinc-finger motif lies at 57–72 (CNECRTFTEEDVCHIC). Residues 81–176 (GLLCVVESPA…DASRIAHGVP (96 aa)) form the Toprim domain.

Belongs to the RecR family.

Functionally, may play a role in DNA repair. It seems to be involved in an RecBC-independent recombinational process of DNA repair. It may act with RecF and RecO. The chain is Recombination protein RecR from Vibrio vulnificus (strain CMCP6).